Here is a 602-residue protein sequence, read N- to C-terminus: ATP-dependent zinc metalloprotease FtsH 3 (602 aa).

Topologically, residues 1–18 (MNSWFLQVSKRLGPAGRR) are cytoplasmic. Residues 19-39 (LWLLGFMGVVLAVTLGLALRA) form a helical membrane-spanning segment. Residues 40-117 (ARESATQRTA…DFASREDPSR (78 aa)) are Periplasmic-facing. The chain crosses the membrane as a helical span at residues 118 to 138 (AASAVLPVVVLAAVGFALFTV). The Cytoplasmic segment spans residues 139 to 602 (SRRRSPKVFS…RRPRPEDQAA (464 aa)). 202-209 (GEPGTGKT) lines the ATP pocket. His-425 contacts Zn(2+). Glu-426 is an active-site residue. Zn(2+) is bound by residues His-429 and Asp-501.

This sequence in the central section; belongs to the AAA ATPase family. In the C-terminal section; belongs to the peptidase M41 family. As to quaternary structure, homohexamer. The cofactor is Zn(2+).

It is found in the cell inner membrane. Its function is as follows. Acts as a processive, ATP-dependent zinc metallopeptidase for both cytoplasmic and membrane proteins. Plays a role in the quality control of integral membrane proteins. In Sorangium cellulosum (strain So ce56) (Polyangium cellulosum (strain So ce56)), this protein is ATP-dependent zinc metalloprotease FtsH 3.